A 477-amino-acid polypeptide reads, in one-letter code: UTP--glucose-1-phosphate uridylyltransferase (477 aa).

N-acetylalanine is present on Ala-2. Residues 92–95, Lys-106, Gln-169, and Gly-198 each bind UTP; that span reads LNGG. 94 to 95 lines the substrate pocket; the sequence is GG. Substrate is bound by residues His-199 and 227-229; that span reads NSD. UTP-binding residues include Asp-229 and Lys-367.

Belongs to the UDPGP type 1 family. Monomer. Mg(2+) serves as cofactor.

It is found in the cytoplasm. It catalyses the reaction alpha-D-glucose 1-phosphate + UTP + H(+) = UDP-alpha-D-glucose + diphosphate. Its activity is regulated as follows. Inhibition by uncomplexed, free UTP. Its function is as follows. Plays a central role as a glucosyl donor in cellular metabolic pathways. The protein is UTP--glucose-1-phosphate uridylyltransferase of Solanum tuberosum (Potato).